Consider the following 409-residue polypeptide: MSNIWSKEETLWSFALYGTAVGAGTLFLPIQLGSAGAVVLFITALVAWPLTYWPHKALCQFILSSKTSAGEGITGAVTHYYGKKIGNLITTLYFIAFFVVVLIYAVAITNSLTEQLAKHMVIDLRIRMLVSLGVVLILNLIFLMGRHATIRVMGFLVFPLIAYFLFLSIYLVGSWQPDLLTTQVEFNQNTLHQIWISIPVMVFAFSHTPIISTFAIDRREKYGEHAMDKCKKIMKVAYLIICISVLFFVFSCLLSIPPSYIEAAKEEGVTILSALSMLPNAPAWLSISGIIVAVVAMSKSFLGTYFGVIEGATEVVKTTLQQVGVKKSRAFNRALSIMLVSLITFIVCCINPNAISMIYAISGPLIAMILFIMPTLSTYLIPALKPWRSIGNLITLIVGILCVSVMFFS.

Topologically, residues Met-1 to Thr-25 are periplasmic. The helical transmembrane segment at Leu-26–Val-46 threads the bilayer. Residues Ala-47–Asn-87 are Cytoplasmic-facing. The chain crosses the membrane as a helical span at residues Leu-88–Ile-108. Residues Thr-109–Arg-127 lie on the Periplasmic side of the membrane. A helical transmembrane segment spans residues Met-128 to Ala-148. Residues Thr-149 to Arg-151 are Cytoplasmic-facing. Residues Val-152–Val-172 form a helical membrane-spanning segment. Residues Gly-173 to Gln-193 are Periplasmic-facing. A helical transmembrane segment spans residues Ile-194–Phe-214. At Ala-215 to Lys-235 the chain is on the cytoplasmic side. A helical transmembrane segment spans residues Val-236 to Ile-256. Over Pro-257–Ser-276 the chain is Periplasmic. A helical membrane pass occupies residues Met-277–Met-297. The Cytoplasmic segment spans residues Ser-298–Arg-329. Residues Ala-330–Ile-350 form a helical membrane-spanning segment. Topologically, residues Asn-351–Asn-353 are periplasmic. The chain crosses the membrane as a helical span at residues Ala-354–Pro-374. Over Thr-375 to Arg-388 the chain is Cytoplasmic. Residues Ser-389–Ser-409 traverse the membrane as a helical segment.

The protein belongs to the amino acid/polyamine transporter 2 family. SdaC/TdcC subfamily.

It is found in the cell inner membrane. The chain is Inner membrane transport protein YqeG (yqeG) from Escherichia coli O6:H1 (strain CFT073 / ATCC 700928 / UPEC).